Here is a 230-residue protein sequence, read N- to C-terminus: Orotidine 5'-phosphate decarboxylase (230 aa).

Substrate contacts are provided by residues Asp-10, Lys-32, Asp-59–Thr-68, Thr-118, Arg-179, Gln-188, Gly-208, and Arg-209. Lys-61 functions as the Proton donor in the catalytic mechanism.

The protein belongs to the OMP decarboxylase family. Type 1 subfamily. As to quaternary structure, homodimer.

It catalyses the reaction orotidine 5'-phosphate + H(+) = UMP + CO2. It participates in pyrimidine metabolism; UMP biosynthesis via de novo pathway; UMP from orotate: step 2/2. Functionally, catalyzes the decarboxylation of orotidine 5'-monophosphate (OMP) to uridine 5'-monophosphate (UMP). The protein is Orotidine 5'-phosphate decarboxylase of Opitutus terrae (strain DSM 11246 / JCM 15787 / PB90-1).